Consider the following 87-residue polypeptide: Cell division topological specificity factor (87 aa).

This sequence belongs to the MinE family.

Its function is as follows. Prevents the cell division inhibition by proteins MinC and MinD at internal division sites while permitting inhibition at polar sites. This ensures cell division at the proper site by restricting the formation of a division septum at the midpoint of the long axis of the cell. This chain is Cell division topological specificity factor, found in Neisseria meningitidis serogroup C (strain 053442).